We begin with the raw amino-acid sequence, 742 residues long: mRNA export factor ICP27 homolog (742 aa).

Basic and acidic residues predominate over residues 1-11 (MELHSRGRHDA). The interval 1–202 (MELHSRGRHD…NHHGSSAGPQ (202 aa)) is disordered. Residues 72 to 85 (SHHHRPCVPARRPR) show a composition bias toward basic residues. Basic and acidic residues predominate over residues 153–171 (KSYDNDDGEPHHHGGDSTH). The span at 179–202 (CPTTFGSSHPSSANNHHGSSAGPQ) shows a compositional bias: polar residues. Residues Cys387, His494, Cys496, and Cys501 each coordinate Zn(2+). The segment at 387–501 (CILDHQDGWG…QCHECQNEMC (115 aa)) adopts a CHC2-type zinc-finger fold. The segment at 540 to 742 (ASNHATAGGQ…MLCYSDDMDD (203 aa)) is disordered. The span at 578-587 (YDKKDREGSH) shows a compositional bias: basic and acidic residues. Positions 614–626 (GELEEDEDSDDAS) are enriched in acidic residues. Positions 692–703 (QSANGNHSTTAT) are enriched in polar residues.

Belongs to the HHV-1 ICP27 protein family. In terms of assembly, self-associates and forms high-molecular-mass complexes. Interacts with host DDX39A and DDX39B; these interactions are required for UL69 function in mRNA export. Interacts with host SUPT6H, EIF4A1 and PABPC1. Phosphorylated by UL97 and host CDK1, CDK7 and CD9. Phosphorylation by CDKs impacts on UL69 nuclear localization and activity.

Its subcellular location is the virion tegument. It is found in the virion. It localises to the host nucleus. The protein resides in the host cytoplasm. Functionally, immediate early (EI) protein that plays many roles during productive infection including regulation of host cell cycle progression, regulation of viral gene expression or nuclear export of intronless viral RNAs. Acts as a transcriptional transactivator via interaction with the cellular transcription elongation factor SUPT6H and as a nuclear RNA export factor via interaction with UAP56, a component of the cellular mRNA export machinery. The polypeptide is mRNA export factor ICP27 homolog (Human cytomegalovirus (strain Merlin) (HHV-5)).